Here is a 176-residue protein sequence, read N- to C-terminus: Endoribonuclease YbeY (176 aa).

Zn(2+) contacts are provided by H139, H143, and H149.

The protein belongs to the endoribonuclease YbeY family. The cofactor is Zn(2+).

It is found in the cytoplasm. Its function is as follows. Single strand-specific metallo-endoribonuclease involved in late-stage 70S ribosome quality control and in maturation of the 3' terminus of the 16S rRNA. In Acaryochloris marina (strain MBIC 11017), this protein is Endoribonuclease YbeY.